We begin with the raw amino-acid sequence, 279 residues long: Large ribosomal subunit protein uL2 (279 aa).

Disordered stretches follow at residues 1–43 (MGIK…TAGR) and 207–279 (KAGR…PGKH). Polar residues predominate over residues 8-22 (PTTNGRRNMTASDFS). Over residues 23–33 (EITKTKPEKSL) the composition is skewed to basic and acidic residues. Residues 34–43 (LDSQSHTAGR) show a composition bias toward polar residues. 2 stretches are compositionally biased toward basic residues: residues 209-219 (GRTRWQGKRPT) and 254-279 (TLGK…PGKH).

It belongs to the universal ribosomal protein uL2 family. Part of the 50S ribosomal subunit. Forms a bridge to the 30S subunit in the 70S ribosome.

In terms of biological role, one of the primary rRNA binding proteins. Required for association of the 30S and 50S subunits to form the 70S ribosome, for tRNA binding and peptide bond formation. It has been suggested to have peptidyltransferase activity; this is somewhat controversial. Makes several contacts with the 16S rRNA in the 70S ribosome. In Lactiplantibacillus plantarum (strain ATCC BAA-793 / NCIMB 8826 / WCFS1) (Lactobacillus plantarum), this protein is Large ribosomal subunit protein uL2.